The primary structure comprises 474 residues: Protein nucleotidyltransferase YdiU (474 aa).

ATP contacts are provided by G89, G91, R92, K112, D124, G125, R175, and R182. D256 serves as the catalytic Proton acceptor. Mg(2+) contacts are provided by N257 and D266. D266 lines the ATP pocket.

The protein belongs to the SELO family. Requires Mg(2+) as cofactor. Mn(2+) is required as a cofactor.

The enzyme catalyses L-seryl-[protein] + ATP = 3-O-(5'-adenylyl)-L-seryl-[protein] + diphosphate. The catalysed reaction is L-threonyl-[protein] + ATP = 3-O-(5'-adenylyl)-L-threonyl-[protein] + diphosphate. It catalyses the reaction L-tyrosyl-[protein] + ATP = O-(5'-adenylyl)-L-tyrosyl-[protein] + diphosphate. It carries out the reaction L-histidyl-[protein] + UTP = N(tele)-(5'-uridylyl)-L-histidyl-[protein] + diphosphate. The enzyme catalyses L-seryl-[protein] + UTP = O-(5'-uridylyl)-L-seryl-[protein] + diphosphate. The catalysed reaction is L-tyrosyl-[protein] + UTP = O-(5'-uridylyl)-L-tyrosyl-[protein] + diphosphate. Functionally, nucleotidyltransferase involved in the post-translational modification of proteins. It can catalyze the addition of adenosine monophosphate (AMP) or uridine monophosphate (UMP) to a protein, resulting in modifications known as AMPylation and UMPylation. This is Protein nucleotidyltransferase YdiU from Corynebacterium glutamicum (strain R).